The sequence spans 282 residues: 4-diphosphocytidyl-2-C-methyl-D-erythritol kinase (282 aa).

Lys11 is an active-site residue. 93–103 (LVSAGLAGGSA) contacts ATP. Residue Asp133 is part of the active site.

Belongs to the GHMP kinase family. IspE subfamily.

The enzyme catalyses 4-CDP-2-C-methyl-D-erythritol + ATP = 4-CDP-2-C-methyl-D-erythritol 2-phosphate + ADP + H(+). Its pathway is isoprenoid biosynthesis; isopentenyl diphosphate biosynthesis via DXP pathway; isopentenyl diphosphate from 1-deoxy-D-xylulose 5-phosphate: step 3/6. Catalyzes the phosphorylation of the position 2 hydroxy group of 4-diphosphocytidyl-2C-methyl-D-erythritol. The polypeptide is 4-diphosphocytidyl-2-C-methyl-D-erythritol kinase (Ehrlichia chaffeensis (strain ATCC CRL-10679 / Arkansas)).